The primary structure comprises 994 residues: Probable beta-galactosidase C (994 aa).

The first 19 residues, 1–19, serve as a signal peptide directing secretion; that stretch reads MKLQSILSCWAILVAQIWA. Residue Tyr-78 participates in substrate binding. An N-linked (GlcNAc...) asparagine glycan is attached at Asn-88. Residues Asn-123, Ala-124, Glu-125, and Asn-183 each coordinate substrate. Catalysis depends on Glu-184, which acts as the Proton donor. Residue Tyr-247 coordinates substrate. A disulfide bridge connects residues Cys-253 and Cys-301. A glycan (N-linked (GlcNAc...) asparagine) is linked at Asn-272. The Nucleophile role is filled by Glu-283. Tyr-350 serves as a coordination point for substrate. Residues Asn-388, Asn-407, Asn-433, Asn-500, Asn-514, Asn-521, Asn-584, Asn-600, Asn-674, Asn-712, Asn-717, Asn-757, Asn-861, and Asn-969 are each glycosylated (N-linked (GlcNAc...) asparagine).

This sequence belongs to the glycosyl hydrolase 35 family.

The protein localises to the secreted. The enzyme catalyses Hydrolysis of terminal non-reducing beta-D-galactose residues in beta-D-galactosides.. Cleaves beta-linked terminal galactosyl residues from gangliosides, glycoproteins, and glycosaminoglycans. In Aspergillus niger (strain ATCC MYA-4892 / CBS 513.88 / FGSC A1513), this protein is Probable beta-galactosidase C (lacC).